Here is a 251-residue protein sequence, read N- to C-terminus: 1-(5-phosphoribosyl)-5-[(5-phosphoribosylamino)methylideneamino] imidazole-4-carboxamide isomerase (251 aa).

Aspartate 8 functions as the Proton acceptor in the catalytic mechanism. The active-site Proton donor is the aspartate 131.

It belongs to the HisA/HisF family.

It is found in the cytoplasm. The catalysed reaction is 1-(5-phospho-beta-D-ribosyl)-5-[(5-phospho-beta-D-ribosylamino)methylideneamino]imidazole-4-carboxamide = 5-[(5-phospho-1-deoxy-D-ribulos-1-ylimino)methylamino]-1-(5-phospho-beta-D-ribosyl)imidazole-4-carboxamide. It participates in amino-acid biosynthesis; L-histidine biosynthesis; L-histidine from 5-phospho-alpha-D-ribose 1-diphosphate: step 4/9. The chain is 1-(5-phosphoribosyl)-5-[(5-phosphoribosylamino)methylideneamino] imidazole-4-carboxamide isomerase from Thiobacillus denitrificans (strain ATCC 25259 / T1).